A 265-amino-acid polypeptide reads, in one-letter code: MSDIITAFILGIVEGLAEFLPISSTGHLILVGHLLGFEGERAKTFEIVIQLGAILAIAILYHKRLVSLCNLKPLLRKEKKFNAFHVFLGVFPAVVAGLLLHDVIKTYLFQPYTVVIGLVAGAILMIFAEVKKQEATSYSLDDLTYRQALTIGLFQCLAVYPGFSRAGSTISGGLLAKVNYKTASEFSFLIALPVMVGATGLDLLKSWTYLSVDDIPMFAVGFITSFIVAMLAVVTFLKLLEKIGLKPFAYYRILLAILFTVFVLL.

The next 7 helical transmembrane spans lie at 4–24, 42–62, 84–104, 108–128, 184–204, 217–237, and 245–265; these read IITA…PISS, AKTF…ILYH, FHVF…HDVI, LFQP…MIFA, SEFS…LDLL, MFAV…VTFL, and LKPF…FVLL.

It belongs to the UppP family.

It localises to the cell membrane. It carries out the reaction di-trans,octa-cis-undecaprenyl diphosphate + H2O = di-trans,octa-cis-undecaprenyl phosphate + phosphate + H(+). In terms of biological role, catalyzes the dephosphorylation of undecaprenyl diphosphate (UPP). Confers resistance to bacitracin. The sequence is that of Undecaprenyl-diphosphatase 1 from Bacillus anthracis.